Reading from the N-terminus, the 543-residue chain is MSMFCFQCQETAKGTGCILSGVCGKTPEVANMQDLLLFVVRGIAVYNQALRKDGRSSARADKFIFDALFTTITNANFDKHAIIKKIKKGLELKKDLSNQVTIEHAPDECTWYGDETEFEEKAQTVGVLRTSDEDIRSLKELVHYGIKGMAAYVEHAYNLGYENPEIFAFMQYALAELTREDITVDELITLTLATGNHGVQAMAQLDTANTSHYGNPEISEVNIGVRNNPGILVSGHDLKDIEELLQQTEGTGIDIYTHSEMLPAHYYPQLKKYKHLVGNYGNAWWKQKEEFESFNGPILFTTNCIVPPRPNATYKDRIYTTGATGLEGATYIPERKDGKQKDFSVIIEHARRCQPPVAIESGKIVGGFAHAQVIALADKVVEAVKSGAIRKFFVMAGCDGRMKSRSYYTEFAEKLPADTVILTAGCAKYRYNKLPLGDINGIPRVLDAGQCNDSYSLAIIAMKLQEVFGLKDINDLPIVYNIAWYEQKAVIVLLALLALGVKKIHLGPTLPAFLSPNVKQVLIDNFGIGGISTADEDIAKFLA.

4 residues coordinate [4Fe-4S] cluster: cysteine 5, cysteine 8, cysteine 17, and cysteine 23. Residues histidine 236, glutamate 260, cysteine 304, cysteine 398, cysteine 426, cysteine 451, glutamate 486, and lysine 488 each contribute to the hybrid [4Fe-2O-2S] cluster site. The residue at position 398 (cysteine 398) is a Cysteine persulfide.

Belongs to the HCP family. The cofactor is [4Fe-4S] cluster. Hybrid [4Fe-2O-2S] cluster serves as cofactor.

The protein resides in the cytoplasm. It catalyses the reaction A + NH4(+) + H2O = hydroxylamine + AH2 + H(+). Catalyzes the reduction of hydroxylamine to form NH(3) and H(2)O. The chain is Hydroxylamine reductase from Bacteroides fragilis (strain ATCC 25285 / DSM 2151 / CCUG 4856 / JCM 11019 / LMG 10263 / NCTC 9343 / Onslow / VPI 2553 / EN-2).